Consider the following 583-residue polypeptide: GTP diphosphokinase CRSH1, chloroplastic (583 aa).

The segment covering M1–P13 has biased composition (low complexity). The tract at residues M1 to G68 is disordered. Residues M1–G69 constitute a chloroplast transit peptide. Residues R19–R39 show a composition bias toward basic residues. Over residues L40–A66 the composition is skewed to low complexity. In terms of domain architecture, HD spans A119–M219. EF-hand domains follow at residues G473–G508 and K510–M542. D486, N488, D490, R492, E497, D520, N522, D524, S526, and E531 together coordinate Ca(2+).

Belongs to the RelA/SpoT family. Expressed in roots and shoots.

The protein resides in the plastid. It is found in the chloroplast. The catalysed reaction is GTP + ATP = guanosine 3'-diphosphate 5'-triphosphate + AMP. With respect to regulation, activated by calcium. Its function is as follows. Possesses calcium-dependent ppGpp (guanosine 3'-diphosphate 5'-diphosphate) synthetase activity in vitro and is able to functionally complement E.coli relA mutants. May be involved in a rapid plant ppGpp-mediated response to pathogens and other stresses. The chain is GTP diphosphokinase CRSH1, chloroplastic from Oryza sativa subsp. japonica (Rice).